The following is an 85-amino-acid chain: Putative membrane protein insertion efficiency factor (85 aa).

Belongs to the UPF0161 family.

The protein localises to the cell membrane. Could be involved in insertion of integral membrane proteins into the membrane. This chain is Putative membrane protein insertion efficiency factor, found in Buchnera aphidicola subsp. Baizongia pistaciae (strain Bp).